We begin with the raw amino-acid sequence, 94 residues long: Large ribosomal subunit protein bL31 (94 aa).

Residues 64–94 are disordered; that stretch reads KYGMANPDEDSTKNTKSSKKETSEDSSSKGS. A compositionally biased stretch (basic and acidic residues) spans 73 to 94; sequence DSTKNTKSSKKETSEDSSSKGS.

This sequence belongs to the bacterial ribosomal protein bL31 family. Type A subfamily. In terms of assembly, part of the 50S ribosomal subunit.

Functionally, binds the 23S rRNA. The sequence is that of Large ribosomal subunit protein bL31 from Prochlorococcus marinus (strain SARG / CCMP1375 / SS120).